We begin with the raw amino-acid sequence, 373 residues long: Zinc finger CCCH domain-containing protein 15 homolog (373 aa).

A disordered region spans residues 1–27; it reads MPPKQAQSKKTVEKEKKKKVEDKTFGL. Residues 10-25 are compositionally biased toward basic and acidic residues; the sequence is KTVEKEKKKKVEDKTF. 2 C3H1-type zinc fingers span residues 95-123 and 167-205; these read DPKS…HDLA and KPTA…HCLP. The stretch at 252–326 forms a coiled coil; that stretch reads KEEKRLQKEK…ALANQINTSL (75 aa). Residues 325–373 form a disordered region; sequence SLFTDGGVLPSDDDDDDDDDDDDDEDGDDEEEDDDEEEGEYEEEEASDE. A compositionally biased stretch (acidic residues) spans 335–373; the sequence is SDDDDDDDDDDDDDEDGDDEEEDDDEEEGEYEEEEASDE.

Belongs to the ZC3H15/TMA46 family.

The protein is Zinc finger CCCH domain-containing protein 15 homolog of Dictyostelium discoideum (Social amoeba).